The following is a 365-amino-acid chain: 3-dehydroquinate synthase (365 aa).

NAD(+) contacts are provided by residues 69-74, 103-107, 127-128, Lys140, and Lys149; these read DGEKYK, GVIGD, and TT. Zn(2+) is bound by residues Glu182, His245, and His262.

The protein belongs to the sugar phosphate cyclases superfamily. Dehydroquinate synthase family. Co(2+) is required as a cofactor. Zn(2+) serves as cofactor. The cofactor is NAD(+).

Its subcellular location is the cytoplasm. It catalyses the reaction 7-phospho-2-dehydro-3-deoxy-D-arabino-heptonate = 3-dehydroquinate + phosphate. Its pathway is metabolic intermediate biosynthesis; chorismate biosynthesis; chorismate from D-erythrose 4-phosphate and phosphoenolpyruvate: step 2/7. Its function is as follows. Catalyzes the conversion of 3-deoxy-D-arabino-heptulosonate 7-phosphate (DAHP) to dehydroquinate (DHQ). The protein is 3-dehydroquinate synthase of Pseudomonas entomophila (strain L48).